We begin with the raw amino-acid sequence, 256 residues long: 5-keto-4-deoxy-D-glucarate aldolase (256 aa).

Residue His50 is the Proton acceptor of the active site. Gln151 is a binding site for substrate. Glu153 contacts Mg(2+). Substrate is bound by residues Ser178 and Asp179. A Mg(2+)-binding site is contributed by Asp179.

Belongs to the HpcH/HpaI aldolase family. KDGluc aldolase subfamily. As to quaternary structure, homohexamer; trimer of dimers. Mg(2+) serves as cofactor.

The enzyme catalyses 5-dehydro-4-deoxy-D-glucarate = 2-hydroxy-3-oxopropanoate + pyruvate. It catalyses the reaction 2-dehydro-3-deoxy-D-glucarate = 2-hydroxy-3-oxopropanoate + pyruvate. The protein operates within carbohydrate acid metabolism; galactarate degradation; D-glycerate from galactarate: step 2/3. Functionally, catalyzes the reversible retro-aldol cleavage of both 5-keto-4-deoxy-D-glucarate and 2-keto-3-deoxy-D-glucarate to pyruvate and tartronic semialdehyde. This Enterobacter sp. (strain 638) protein is 5-keto-4-deoxy-D-glucarate aldolase.